Reading from the N-terminus, the 48-residue chain is Cuticle protein 5.1 (48 aa).

Component of the cuticle of migratory locust which contains more than 100 different structural proteins. The sequence is that of Cuticle protein 5.1 from Locusta migratoria (Migratory locust).